The chain runs to 398 residues: Streptopain (398 aa).

The signal sequence occupies residues 1–27; the sequence is MNKKKLGIRLLSLLALGGFVLANPVFA. Positions 28–145 are excised as a propeptide; it reads DQNFARNEKE…TTYAGTAEIK (118 aa). Catalysis depends on Cys192, which acts as the Nucleophile. Position 192 is a cysteine methyl disulfide; in zymogen form (Cys192). 2 residues coordinate a protein: Ser282 and Gly339. Residue His340 is the Proton acceptor of the active site. Residues 368–390 are C-terminal active site loop; sequence RLDALNPSALGTGGGAGGFNGYQ.

Belongs to the peptidase C10 family. As to quaternary structure, monomer. The mature protease is derived from the precursor sequence by cleavage, either in cis via an autocatalytic mechanism, or in trans by mature SpeB or host proteases (trypsin, plasmin or subtilisin). Maturation can involve a number of protein cleavage intermediates. Mature SpeB probably plays the most important role in protein maturation in physiological conditions. In terms of processing, methylthiolation at Cys-192 of the inactive zymogen form is probably involved in the mechanism of secretion of the proteinase into the culture fluid.

Its subcellular location is the secreted. It is found in the host extracellular space. It localises to the host cytoplasm. The catalysed reaction is Preferential cleavage with hydrophobic residues at P2, P1 and P1'.. Synthesized as an inactive zymogen to protect the intracellular components of the bacteria from proteolytic activity during protein production. Once secreted into the extracellular milieu, cleaved into the active protease: maturation can be mediated in cis by autocatalytic cleavage, or in trans by mature SpeB or host proteases. Protease activity is strongly inhibited by zinc and copper, which prevent its maturation into an active protease: inhibition by metal ions may be required to prevent proteolysis of streptococcal proteins. In terms of biological role, cysteine protease that acts as a key streptococcal virulence factor by cleaving host proteins involved in immune response. Triggers inflammation by mediating cleavage of host proteins, which can both promote host pathogenesis by triggering sterile inflammation and/or restrict streptococcal infection, depending on host immune statue and infection site. Cleaves host gasdermin-A (GSDMA) in epithelial cells, promoting GSDMA activation and formation of gasdermin pores, triggering pyroptosis. Pyroptosis triggers the elimination of the infected skin cell, depriving the pathogen of its protective niche, while inducing an inflammatory response. This ultimately prevents bacterial penetration of the epithelial barrier and a subsequent systemic dissemination of the pathogen. Also mediates cleavage of the cytokine precursor interleukin-1 beta (IL1B) to its mature form, resulting in inflammation and septic shock. SpeB-mediated maturation of IL1B plays a dual role depending on infection site: while IL1B inflammatory response prevents bacterial growth during invasive skin infections, it promotes streptococcal infection of the nasopharynx by disrupting colonization resistance mediated by the microbiota. Inhibits host autophagy be catalyzing cleavage and inactivation of key autophagy factors, such as CALCOCO2, NBR1 and SQSTM1. Cleaves and inhibits a number of complement factors, such as C2, C3-beta chain of C3, C4, C5 or SERPING1, thereby promoting evasion of host immunity. May also impair adaptive immunity by catalyzing cleavage and degradation of host immunoglobulins to promote immune system evasion; the relevance of this activity is however unsure in vivo. Catalyzes maturation and release of the peptide hormone bradykinin from the precursor Kininogen-1 (KNG1) to produce hypotension during septic shock. Also involved in bacterial translocation across the host epithelial barrier by mediating cleavage and degradation of host epithelial junction proteins, such as CDH1 and OCLN. Additionally, has been involved in degradation of fibronectin and vitronectin, two host extracellular matrix proteins involved in tissue integrity. Also able to catalyze cleavage and degradation of streptococcal proteins, such as C5a peptidase, EndoS or SmeZ. Degradation of streptococcal proteins is however strictly regulated to preserve integrity of other virulence factors. The polypeptide is Streptopain (speB) (Streptococcus pyogenes serotype M3 (strain ATCC BAA-595 / MGAS315)).